The sequence spans 315 residues: Small ribosomal subunit protein uS9m (315 aa).

The N-terminal 42 residues, 1-42 (MMASLRHSITSALRSSRQGCSKSAQWQSLDQQFGALRISSRS), are a transit peptide targeting the mitochondrion. The tract at residues 293-315 (PRKVERKKHGHVKARKMPTWVKR) is disordered. The segment covering 296–315 (VERKKHGHVKARKMPTWVKR) has biased composition (basic residues).

The protein belongs to the universal ribosomal protein uS9 family. Component of the mitochondrial small ribosomal subunit (mt-SSU). Mature N.crassa 74S mitochondrial ribosomes consist of a small (37S) and a large (54S) subunit. The 37S small subunit contains a 16S ribosomal RNA (16S mt-rRNA) and 32 different proteins. The 54S large subunit contains a 23S rRNA (23S mt-rRNA) and 42 different proteins.

The protein resides in the mitochondrion. Its function is as follows. Component of the mitochondrial ribosome (mitoribosome), a dedicated translation machinery responsible for the synthesis of mitochondrial genome-encoded proteins, including at least some of the essential transmembrane subunits of the mitochondrial respiratory chain. The mitoribosomes are attached to the mitochondrial inner membrane and translation products are cotranslationally integrated into the membrane. This chain is Small ribosomal subunit protein uS9m (mrp-9), found in Neurospora crassa (strain ATCC 24698 / 74-OR23-1A / CBS 708.71 / DSM 1257 / FGSC 987).